Consider the following 198-residue polypeptide: Ribonuclease HII (198 aa).

The 189-residue stretch at 10–198 (QLVAGVDEVG…PVKRALGLAS (189 aa)) folds into the RNase H type-2 domain. A divalent metal cation-binding residues include aspartate 16, glutamate 17, and aspartate 108.

This sequence belongs to the RNase HII family. Mn(2+) serves as cofactor. The cofactor is Mg(2+).

The protein resides in the cytoplasm. It carries out the reaction Endonucleolytic cleavage to 5'-phosphomonoester.. In terms of biological role, endonuclease that specifically degrades the RNA of RNA-DNA hybrids. The polypeptide is Ribonuclease HII (Citrobacter koseri (strain ATCC BAA-895 / CDC 4225-83 / SGSC4696)).